A 586-amino-acid polypeptide reads, in one-letter code: Glutathione hydrolase 5 proenzyme (586 aa).

At 1 to 8 (MARGYGAT) the chain is on the cytoplasmic side. Residues 9 to 29 (VSLVLLGLGLALAVIVLAVVL) traverse the membrane as a helical; Signal-anchor for type II membrane protein segment. Over 30 to 586 (SRHQAPCGPQ…LRKSGEAAGY (557 aa)) the chain is Extracellular. A glycan (N-linked (GlcNAc...) asparagine) is linked at Asn98. Arg110 serves as a coordination point for L-glutamate. 3 N-linked (GlcNAc...) asparagine glycosylation sites follow: Asn204, Asn303, and Asn347. The active-site Nucleophile is Thr388. L-glutamate-binding positions include Thr406, Glu427, and 469–470 (SS). Asn535 and Asn550 each carry an N-linked (GlcNAc...) asparagine glycan.

This sequence belongs to the gamma-glutamyltransferase family. As to quaternary structure, heterodimer composed of the light and heavy chains. The active site is located in the light chain. Cleaved by autocatalysis into a large and a small subunit. In terms of processing, glycosylated. As to expression, expressed in follicular dendritic cells in lymphoid follicles (at protein level).

It is found in the membrane. It catalyses the reaction glutathione + H2O = L-cysteinylglycine + L-glutamate. The catalysed reaction is an S-substituted glutathione + H2O = an S-substituted L-cysteinylglycine + L-glutamate. The enzyme catalyses leukotriene C4 + H2O = leukotriene D4 + L-glutamate. It carries out the reaction S-[(2E,6E,10E)-geranylgeranyl]-L-glutathione + H2O = S-[(2E,6E,10E)-geranylgeranyl]-L-cysteinylglycine + L-glutamate. It catalyses the reaction an N-terminal (5-L-glutamyl)-[peptide] + an alpha-amino acid = 5-L-glutamyl amino acid + an N-terminal L-alpha-aminoacyl-[peptide]. The protein operates within sulfur metabolism; glutathione metabolism. It participates in lipid metabolism; leukotriene D4 biosynthesis. Its activity is regulated as follows. Inhibited by serine-borate. Functionally, cleaves the gamma-glutamyl bond of extracellular glutathione tripeptide (gamma-Glu-Cys-Gly) and certain glutathione conjugates. Hydrolyzes glutathione releasing L-Glu and Cys-Gly dipeptide which is further metabolized to maintain extracellular cysteine levels but also to provide cysteine necessary for intracellular glutathione synthesis. Among glutathione-S-conjugates metabolizes leukotriene C4 (LTC4) and S-geranylgeranyl-glutathione (GGG), but is inactive toward gamma-glutamyl leucine. Converts extracellular LTC4 to LTD4 during acute inflammatory response. Acts as a negative regulator of GGG bioactivity. GGT5 (via GGG catabolism) and ABCC1 (via extracellular transport) establish GGG gradients within lymphoid tissues to position P2RY8-positive lymphocytes at germinal centers in lymphoid follicles and restrict their chemotactic transmigration from blood vessels to bone marrow parenchyma. The transpeptidation reaction, i.e. the transfer of gamma-glutamyl moiety to an acceptor molecule to yield a new gamma-glutamyl compound requires high concentration of dipeptide acceptor and is considered nonphysiological. This chain is Glutathione hydrolase 5 proenzyme (GGT5), found in Homo sapiens (Human).